A 58-amino-acid polypeptide reads, in one-letter code: Short neurotoxin MS11 (58 aa).

Cystine bridges form between Cys3/Cys20, Cys13/Cys38, Cys42/Cys50, and Cys51/Cys56.

This sequence belongs to the three-finger toxin family. Short-chain subfamily. In terms of tissue distribution, expressed by the venom gland.

Its subcellular location is the secreted. Functionally, produces peripheral paralysis by blocking neuromuscular transmission at the postsynaptic site. Binds to and inhibits the endogenous nicotinic acetylcholine receptors (nAChR) in the human rhabdomyosarcoma TE 671 cell line with an IC(50) of 266 mM. Not toxic to mice by intraperitoneal injection or to zebrafish by injection at the back dorsolateral region. The protein is Short neurotoxin MS11 of Micrurus surinamensis (Surinam coral snake).